A 499-amino-acid chain; its full sequence is Protein nucleotidyltransferase YdiU (499 aa).

Residues Gly-95, Gly-97, Arg-98, Lys-117, Asp-129, Gly-130, Arg-180, and Arg-187 each coordinate ATP. Residue Asp-256 is the Proton acceptor of the active site. Mg(2+)-binding residues include Asn-257 and Asp-266. Asp-266 is a binding site for ATP.

It belongs to the SELO family. The cofactor is Mg(2+). Requires Mn(2+) as cofactor.

It catalyses the reaction L-seryl-[protein] + ATP = 3-O-(5'-adenylyl)-L-seryl-[protein] + diphosphate. The enzyme catalyses L-threonyl-[protein] + ATP = 3-O-(5'-adenylyl)-L-threonyl-[protein] + diphosphate. It carries out the reaction L-tyrosyl-[protein] + ATP = O-(5'-adenylyl)-L-tyrosyl-[protein] + diphosphate. The catalysed reaction is L-histidyl-[protein] + UTP = N(tele)-(5'-uridylyl)-L-histidyl-[protein] + diphosphate. It catalyses the reaction L-seryl-[protein] + UTP = O-(5'-uridylyl)-L-seryl-[protein] + diphosphate. The enzyme catalyses L-tyrosyl-[protein] + UTP = O-(5'-uridylyl)-L-tyrosyl-[protein] + diphosphate. Functionally, nucleotidyltransferase involved in the post-translational modification of proteins. It can catalyze the addition of adenosine monophosphate (AMP) or uridine monophosphate (UMP) to a protein, resulting in modifications known as AMPylation and UMPylation. This chain is Protein nucleotidyltransferase YdiU, found in Dechloromonas aromatica (strain RCB).